The chain runs to 289 residues: Probable signal peptidase I (289 aa).

Residues 1–53 lie on the Cytoplasmic side of the membrane; sequence MTETTDSVPEPPSDADQLQPKVSICGLDMPAEVSETAAEAAIGVSEPKKRSAL. The helical transmembrane segment at 54–74 threads the bilayer; the sequence is WEFAILAVIAIGLYYVMLTFV. Residues 75-289 lie on the Extracellular side of the membrane; that stretch reads ARPYLIPSES…VGSVNSQQGQ (215 aa). Catalysis depends on residues S84 and K162.

Belongs to the peptidase S26 family.

The protein localises to the cell membrane. The catalysed reaction is Cleavage of hydrophobic, N-terminal signal or leader sequences from secreted and periplasmic proteins.. The polypeptide is Probable signal peptidase I (lepB) (Mycobacterium leprae (strain TN)).